Here is a 416-residue protein sequence, read N- to C-terminus: NADH-quinone oxidoreductase subunit D (416 aa).

Belongs to the complex I 49 kDa subunit family. In terms of assembly, NDH-1 is composed of 14 different subunits. Subunits NuoB, C, D, E, F, and G constitute the peripheral sector of the complex.

It is found in the cell inner membrane. It carries out the reaction a quinone + NADH + 5 H(+)(in) = a quinol + NAD(+) + 4 H(+)(out). Functionally, NDH-1 shuttles electrons from NADH, via FMN and iron-sulfur (Fe-S) centers, to quinones in the respiratory chain. The immediate electron acceptor for the enzyme in this species is believed to be ubiquinone. Couples the redox reaction to proton translocation (for every two electrons transferred, four hydrogen ions are translocated across the cytoplasmic membrane), and thus conserves the redox energy in a proton gradient. This chain is NADH-quinone oxidoreductase subunit D, found in Gluconacetobacter diazotrophicus (strain ATCC 49037 / DSM 5601 / CCUG 37298 / CIP 103539 / LMG 7603 / PAl5).